We begin with the raw amino-acid sequence, 374 residues long: Anhydro-N-acetylmuramic acid kinase (374 aa).

ATP is bound at residue 15 to 22 (GTSADGID).

The protein belongs to the anhydro-N-acetylmuramic acid kinase family.

The catalysed reaction is 1,6-anhydro-N-acetyl-beta-muramate + ATP + H2O = N-acetyl-D-muramate 6-phosphate + ADP + H(+). The protein operates within amino-sugar metabolism; 1,6-anhydro-N-acetylmuramate degradation. It functions in the pathway cell wall biogenesis; peptidoglycan recycling. In terms of biological role, catalyzes the specific phosphorylation of 1,6-anhydro-N-acetylmuramic acid (anhMurNAc) with the simultaneous cleavage of the 1,6-anhydro ring, generating MurNAc-6-P. Is required for the utilization of anhMurNAc either imported from the medium or derived from its own cell wall murein, and thus plays a role in cell wall recycling. The protein is Anhydro-N-acetylmuramic acid kinase of Xanthomonas axonopodis pv. citri (strain 306).